A 163-amino-acid chain; its full sequence is Interleukin-17F (163 aa).

The first 30 residues, 1–30 (MTVKTLHGPAMVKYLLLSILGLAFLSEAAA), serve as a signal peptide directing secretion. Residue Asn-83 is glycosylated (N-linked (GlcNAc...) asparagine). Cystine bridges form between Cys-102/Cys-152 and Cys-107/Cys-154.

The protein belongs to the IL-17 family. In terms of assembly, homodimer; disulfide-linked. Heterodimer with IL17A (IL17A-IL17F). Forms complexes with IL17RA and IL17RC receptors with 2:1 binding stoichiometry: two receptor chains for one interleukin molecule. IL17F homodimer forms predominantly complexes with IL17RC homodimer, whereas IL17A-IL17F favors complexes with IL17RA-IL17RC. IL17RA and IL17RC chains cannot distinguish between IL17A and IL17F molecules, potentially enabling the formation of topologically distinct complexes. Expressed in T-helper 1 and T-helper 2 cells, basophils and mast cells.

The protein localises to the secreted. In terms of biological role, effector cytokine of innate and adaptive immune system involved in antimicrobial host defense and maintenance of tissue integrity. IL17A-IL17F signals via IL17RA-IL17RC heterodimeric receptor complex, triggering homotypic interaction of IL17RA and IL17RC chains with TRAF3IP2 adapter through SEFIR domains. This leads to downstream TRAF6-mediated activation of NF-kappa-B and MAPkinase pathways ultimately resulting in transcriptional activation of cytokines, chemokines, antimicrobial peptides and matrix metalloproteinases, with potential strong immune inflammation. IL17A-IL17F is primarily involved in host defense against extracellular bacteria and fungi by inducing neutrophilic inflammation. As signature effector cytokine of T-helper 17 cells (Th17), primarily induces neutrophil activation and recruitment at infection and inflammatory sites. Stimulates the production of antimicrobial beta-defensins DEFB1, DEFB103A, and DEFB104A by mucosal epithelial cells, limiting the entry of microbes through the epithelial barriers. IL17F homodimer can signal via IL17RC homodimeric receptor complex, triggering downstream activation of TRAF6 and NF-kappa-B signaling pathway. Via IL17RC induces transcriptional activation of IL33, a potent cytokine that stimulates group 2 innate lymphoid cells and adaptive T-helper 2 cells involved in pulmonary allergic response to fungi. Likely via IL17RC, promotes sympathetic innervation of peripheral organs by coordinating the communication between gamma-delta T cells and parenchymal cells. Stimulates sympathetic innervation of thermogenic adipose tissue by driving TGFB1 expression. Regulates the composition of intestinal microbiota and immune tolerance by inducing antimicrobial proteins that specifically control the growth of commensal Firmicutes and Bacteroidetes. This is Interleukin-17F (IL17F) from Homo sapiens (Human).